We begin with the raw amino-acid sequence, 291 residues long: Glycine--tRNA ligase alpha subunit (291 aa).

The protein belongs to the class-II aminoacyl-tRNA synthetase family. In terms of assembly, tetramer of two alpha and two beta subunits.

It localises to the cytoplasm. The enzyme catalyses tRNA(Gly) + glycine + ATP = glycyl-tRNA(Gly) + AMP + diphosphate. In Microcystis aeruginosa (strain NIES-843 / IAM M-2473), this protein is Glycine--tRNA ligase alpha subunit.